Consider the following 376-residue polypeptide: tRNA-specific 2-thiouridylase MnmA (376 aa).

Residues 17 to 24 (GMSGGVDS) and Met-43 contribute to the ATP site. Residues 103–105 (NPD) are interaction with target base in tRNA. Cys-108 serves as the catalytic Nucleophile. Cys-108 and Cys-205 form a disulfide bridge. Gly-132 serves as a coordination point for ATP. The tract at residues 155-157 (KDQ) is interaction with tRNA. Residue Cys-205 is the Cysteine persulfide intermediate of the active site. Residues 315–316 (RY) form an interaction with tRNA region.

This sequence belongs to the MnmA/TRMU family.

The protein localises to the cytoplasm. The catalysed reaction is S-sulfanyl-L-cysteinyl-[protein] + uridine(34) in tRNA + AH2 + ATP = 2-thiouridine(34) in tRNA + L-cysteinyl-[protein] + A + AMP + diphosphate + H(+). In terms of biological role, catalyzes the 2-thiolation of uridine at the wobble position (U34) of tRNA, leading to the formation of s(2)U34. This is tRNA-specific 2-thiouridylase MnmA from Dichelobacter nodosus (strain VCS1703A).